A 216-amino-acid polypeptide reads, in one-letter code: ATP-dependent Clp protease proteolytic subunit (216 aa).

Catalysis depends on serine 101, which acts as the Nucleophile. The active site involves histidine 126.

The protein belongs to the peptidase S14 family. As to quaternary structure, component of the chloroplastic Clp protease core complex.

The protein localises to the plastid. Its subcellular location is the chloroplast stroma. The enzyme catalyses Hydrolysis of proteins to small peptides in the presence of ATP and magnesium. alpha-casein is the usual test substrate. In the absence of ATP, only oligopeptides shorter than five residues are hydrolyzed (such as succinyl-Leu-Tyr-|-NHMec, and Leu-Tyr-Leu-|-Tyr-Trp, in which cleavage of the -Tyr-|-Leu- and -Tyr-|-Trp bonds also occurs).. Its function is as follows. Cleaves peptides in various proteins in a process that requires ATP hydrolysis. Has a chymotrypsin-like activity. Plays a major role in the degradation of misfolded proteins. This chain is ATP-dependent Clp protease proteolytic subunit, found in Oryza nivara (Indian wild rice).